Reading from the N-terminus, the 218-residue chain is MSLLGRIAEKTSRLSCLRLMSVYPTHYVEPIVQKYKQLEQKNDLSKLYHVPIKAAVNKSSDTIFHDDTKHKMINYITKKGNSALARTLLSKTLELIKRTQTEHMNLAKGEKTTINTNPETLLKQAVENCRPLLQVTAIKRGGVTYQVPVPITTKRSYFLAMKWLLEAAREKERKVSLPEKLAWEILDAAHGQGRVIKRKDDLHRLCESNRAYAHYRWS.

Residues 1 to 19 constitute a mitochondrion transit peptide; that stretch reads MSLLGRIAEKTSRLSCLRL.

Belongs to the universal ribosomal protein uS7 family. As to quaternary structure, component of the mitochondrial ribosome small subunit (28S) which comprises a 12S rRNA and about 30 distinct proteins.

The protein resides in the mitochondrion. The sequence is that of Small ribosomal subunit protein uS7m (mRpS7) from Drosophila melanogaster (Fruit fly).